A 465-amino-acid chain; its full sequence is Phosphomannomutase/phosphoglucomutase (465 aa).

Ser-110 serves as the catalytic Phosphoserine intermediate. Residues Ser-110, Asp-244, Asp-246, and Asp-248 each coordinate Mg(2+). Positions 327, 329, and 331 each coordinate substrate.

The protein belongs to the phosphohexose mutase family. Monomer. The cofactor is Mg(2+).

The catalysed reaction is alpha-D-mannose 1-phosphate = D-mannose 6-phosphate. It catalyses the reaction alpha-D-glucose 1-phosphate = alpha-D-glucose 6-phosphate. It functions in the pathway nucleotide-sugar biosynthesis; GDP-alpha-D-mannose biosynthesis; alpha-D-mannose 1-phosphate from D-fructose 6-phosphate: step 2/2. Its pathway is bacterial outer membrane biogenesis; lipopolysaccharide biosynthesis. Functionally, the phosphomannomutase activity produces a precursor for alginate polymerization. The alginate layer causes a mucoid phenotype and provides a protective barrier against host immune defenses and antibiotics. Also involved in core-LPS biosynthesis due to its phosphoglucomutase activity. Essential for biofilm production. This Pseudomonas syringae pv. tomato (strain ATCC BAA-871 / DC3000) protein is Phosphomannomutase/phosphoglucomutase (algC).